A 55-amino-acid chain; its full sequence is ATP synthase F(0) complex subunit 8 (55 aa).

A helical membrane pass occupies residues 4-24 (LNPAPWFMIFMFTWAIFLTIL). Residues 34 to 55 (PNEPSPQGMTTPKTAPWNWPWH) form a disordered region.

The protein belongs to the ATPase protein 8 family. As to quaternary structure, component of the ATP synthase complex composed at least of ATP5F1A/subunit alpha, ATP5F1B/subunit beta, ATP5MC1/subunit c (homooctomer), MT-ATP6/subunit a, MT-ATP8/subunit 8, ATP5ME/subunit e, ATP5MF/subunit f, ATP5MG/subunit g, ATP5MK/subunit k, ATP5MJ/subunit j, ATP5F1C/subunit gamma, ATP5F1D/subunit delta, ATP5F1E/subunit epsilon, ATP5PF/subunit F6, ATP5PB/subunit b, ATP5PD/subunit d, ATP5PO/subunit OSCP. ATP synthase complex consists of a soluble F(1) head domain (subunits alpha(3) and beta(3)) - the catalytic core - and a membrane F(0) domain - the membrane proton channel (subunits c, a, 8, e, f, g, k and j). These two domains are linked by a central stalk (subunits gamma, delta, and epsilon) rotating inside the F1 region and a stationary peripheral stalk (subunits F6, b, d, and OSCP).

It is found in the mitochondrion membrane. In terms of biological role, subunit 8, of the mitochondrial membrane ATP synthase complex (F(1)F(0) ATP synthase or Complex V) that produces ATP from ADP in the presence of a proton gradient across the membrane which is generated by electron transport complexes of the respiratory chain. ATP synthase complex consist of a soluble F(1) head domain - the catalytic core - and a membrane F(1) domain - the membrane proton channel. These two domains are linked by a central stalk rotating inside the F(1) region and a stationary peripheral stalk. During catalysis, ATP synthesis in the catalytic domain of F(1) is coupled via a rotary mechanism of the central stalk subunits to proton translocation. In vivo, can only synthesize ATP although its ATP hydrolase activity can be activated artificially in vitro. Part of the complex F(0) domain. This is ATP synthase F(0) complex subunit 8 from Gadus morhua (Atlantic cod).